The following is a 220-amino-acid chain: MNYNSLFDHTLLRADASVEEIKQLCDEAVKFNFFSVCVNPSYVPYVKEQLHNSSVKICTVVGFPLGQTSTKQKVYETKIAIKEGADEIDMVLNISEFKENCACVVNEIRKYKKVCKKKILKVIVETALLSENEIEKATLVVIDGGADFIKTSTGFSSRGASIKDIEIMKNVIEKNNSKLKIKASGGIKTLTFVEELIKAGAERIGSSKSVEIIKETLNKN.

Aspartate 89 serves as the catalytic Proton donor/acceptor. Residue lysine 150 is the Schiff-base intermediate with acetaldehyde of the active site. Lysine 182 (proton donor/acceptor) is an active-site residue.

Belongs to the DeoC/FbaB aldolase family. DeoC type 1 subfamily.

The protein localises to the cytoplasm. The catalysed reaction is 2-deoxy-D-ribose 5-phosphate = D-glyceraldehyde 3-phosphate + acetaldehyde. The protein operates within carbohydrate degradation; 2-deoxy-D-ribose 1-phosphate degradation; D-glyceraldehyde 3-phosphate and acetaldehyde from 2-deoxy-alpha-D-ribose 1-phosphate: step 2/2. Its function is as follows. Catalyzes a reversible aldol reaction between acetaldehyde and D-glyceraldehyde 3-phosphate to generate 2-deoxy-D-ribose 5-phosphate. In Mycoplasmoides pirum (Mycoplasma pirum), this protein is Deoxyribose-phosphate aldolase.